Reading from the N-terminus, the 134-residue chain is Small ribosomal subunit protein uS11 (134 aa).

Residues 1–22 are disordered; it reads MAQKTRATAARKPRRKVNKNVT. Positions 9–18 are enriched in basic residues; that stretch reads AARKPRRKVN.

It belongs to the universal ribosomal protein uS11 family. As to quaternary structure, part of the 30S ribosomal subunit. Interacts with proteins S7 and S18. Binds to IF-3.

Functionally, located on the platform of the 30S subunit, it bridges several disparate RNA helices of the 16S rRNA. Forms part of the Shine-Dalgarno cleft in the 70S ribosome. The sequence is that of Small ribosomal subunit protein uS11 from Kocuria rhizophila (strain ATCC 9341 / DSM 348 / NBRC 103217 / DC2201).